The primary structure comprises 308 residues: ADP-L-glycero-D-manno-heptose-6-epimerase (308 aa).

NADP(+)-binding positions include 10 to 11 (FI), 31 to 32 (DN), lysine 38, lysine 53, 75 to 79 (EGACS), and asparagine 92. Tyrosine 139 acts as the Proton acceptor in catalysis. Lysine 143 lines the NADP(+) pocket. A substrate-binding site is contributed by asparagine 168. NADP(+) is bound by residues valine 169 and lysine 177. Lysine 177 acts as the Proton acceptor in catalysis. Residues serine 179, histidine 186, 200–203 (FAGS), arginine 208, and tyrosine 271 each bind substrate.

The protein belongs to the NAD(P)-dependent epimerase/dehydratase family. HldD subfamily. As to quaternary structure, homopentamer. The cofactor is NADP(+).

It catalyses the reaction ADP-D-glycero-beta-D-manno-heptose = ADP-L-glycero-beta-D-manno-heptose. Its pathway is nucleotide-sugar biosynthesis; ADP-L-glycero-beta-D-manno-heptose biosynthesis; ADP-L-glycero-beta-D-manno-heptose from D-glycero-beta-D-manno-heptose 7-phosphate: step 4/4. Its function is as follows. Catalyzes the interconversion between ADP-D-glycero-beta-D-manno-heptose and ADP-L-glycero-beta-D-manno-heptose via an epimerization at carbon 6 of the heptose. The sequence is that of ADP-L-glycero-D-manno-heptose-6-epimerase from Haemophilus influenzae (strain 86-028NP).